The following is a 148-amino-acid chain: MFRRPVVQVLRQFVRHESEVASSLVLERSLNRVQLLGRVGQDPVMRQVEGKNPDTIFSLATNEMWRSGENETYQMGDVSQKTTWHRISVFRPGLRDVAYQYVKKGSRIYVEGKVDYGEYTDKNNVRRQATTIIADNIIFLSDQIKEKP.

The N-terminal 16 residues, 1 to 16 (MFRRPVVQVLRQFVRH), are a transit peptide targeting the mitochondrion. Residues 30–141 (LNRVQLLGRV…IIADNIIFLS (112 aa)) form the SSB domain. A phosphoserine mark is found at Ser-67 and Ser-79. An N6-acetyllysine modification is found at Lys-113. Position 122 is an N6-succinyllysine (Lys-122).

In terms of assembly, homotetramer. Interacts with MPG/AAG, through inhibition of its glycosylase activity it potentially prevents formation of DNA breaks in ssDNA, ensuring that base removal primarily occurs in dsDNA. Interacts with POLDIP2. Interacts with PRIMPOL.

The protein localises to the mitochondrion. It localises to the mitochondrion matrix. It is found in the mitochondrion nucleoid. In terms of biological role, binds preferentially and cooperatively to pyrimidine rich single-stranded DNA (ss-DNA). In vitro, required to maintain the copy number of mitochondrial DNA (mtDNA) and plays a crucial role during mtDNA replication by stimulating the activity of the replisome components POLG and TWNK at the replication fork. Promotes the activity of the gamma complex polymerase POLG, largely by organizing the template DNA and eliminating secondary structures to favor ss-DNA conformations that facilitate POLG activity. In addition it is able to promote the 5'-3' unwinding activity of the mtDNA helicase TWNK. May also function in mtDNA repair. In Bos taurus (Bovine), this protein is Single-stranded DNA-binding protein, mitochondrial (SSBP1).